The primary structure comprises 218 residues: Peptide methionine sulfoxide reductase MsrA (218 aa).

The active site involves Cys-57.

Belongs to the MsrA Met sulfoxide reductase family.

The catalysed reaction is L-methionyl-[protein] + [thioredoxin]-disulfide + H2O = L-methionyl-(S)-S-oxide-[protein] + [thioredoxin]-dithiol. It catalyses the reaction [thioredoxin]-disulfide + L-methionine + H2O = L-methionine (S)-S-oxide + [thioredoxin]-dithiol. Has an important function as a repair enzyme for proteins that have been inactivated by oxidation. Catalyzes the reversible oxidation-reduction of methionine sulfoxide in proteins to methionine. This Brucella suis biovar 1 (strain 1330) protein is Peptide methionine sulfoxide reductase MsrA.